A 1170-amino-acid chain; its full sequence is DNA-directed RNA polymerase subunit beta' (1170 aa).

Zn(2+) is bound by residues cysteine 60, cysteine 62, cysteine 75, and cysteine 78. Mg(2+) is bound by residues aspartate 449, aspartate 451, and aspartate 453. Cysteine 774, cysteine 848, cysteine 855, and cysteine 858 together coordinate Zn(2+). The disordered stretch occupies residues 1145–1170 (EPGEENGEPGGERLYGMDELYGETAN).

The protein belongs to the RNA polymerase beta' chain family. The RNAP catalytic core consists of 2 alpha, 1 beta, 1 beta' and 1 omega subunit. When a sigma factor is associated with the core the holoenzyme is formed, which can initiate transcription. Mg(2+) serves as cofactor. Zn(2+) is required as a cofactor.

The enzyme catalyses RNA(n) + a ribonucleoside 5'-triphosphate = RNA(n+1) + diphosphate. Functionally, DNA-dependent RNA polymerase catalyzes the transcription of DNA into RNA using the four ribonucleoside triphosphates as substrates. This chain is DNA-directed RNA polymerase subunit beta', found in Pelotomaculum thermopropionicum (strain DSM 13744 / JCM 10971 / SI).